The primary structure comprises 524 residues: Origin of replication complex subunit 5 (524 aa).

Low complexity predominate over residues 1 to 19 (MSQPVTPRRTTRSSASASP). Residues 1-56 (MSQPVTPRRTTRSSASASPSPAPASPTSPPKSRPKPSPRRQLLAAAAAPPKEDGSS) are disordered. The segment covering 20-31 (SPAPASPTSPPK) has biased composition (pro residues). Residues 39 to 49 (RRQLLAAAAAP) are compositionally biased toward low complexity. Residue 90–97 (GGAATGKT) coordinates ATP.

Belongs to the ORC5 family. In terms of assembly, component of the origin recognition complex (ORC) composed of at least ORC1, ORC2, ORC3, ORC4, ORC5 and ORC6. ORC is regulated in a cell-cycle and development dependent manner. It is sequentially assembled at the exit from anaphase of mitosis and disassembled as cells enter S phase.

The protein localises to the nucleus. Its function is as follows. Component of the origin recognition complex (ORC) that binds origins of replication. DNA-binding is ATP-dependent. The specific DNA sequences that define origins of replication have not been identified yet. ORC is required to assemble the pre-replication complex necessary to initiate DNA replication. The polypeptide is Origin of replication complex subunit 5 (Oryza sativa subsp. indica (Rice)).